Here is a 609-residue protein sequence, read N- to C-terminus: DNA mismatch repair protein MutL (609 aa).

Positions 364–386 (SVNSKPTDYRPAMSPSFKSTPNT) are disordered.

Belongs to the DNA mismatch repair MutL/HexB family.

This protein is involved in the repair of mismatches in DNA. It is required for dam-dependent methyl-directed DNA mismatch repair. May act as a 'molecular matchmaker', a protein that promotes the formation of a stable complex between two or more DNA-binding proteins in an ATP-dependent manner without itself being part of a final effector complex. The chain is DNA mismatch repair protein MutL from Rickettsia akari (strain Hartford).